Here is a 246-residue protein sequence, read N- to C-terminus: Pyruvate formate-lyase 1-activating enzyme (246 aa).

Residues 16–239 form the Radical SAM core domain; sequence VDGPGIRFIT…MERVKGILEQ (224 aa). The [4Fe-4S] cluster site is built by C30, C34, and C37. S-adenosyl-L-methionine is bound by residues 36 to 38, G79, 130 to 132, and H203; these read YCH and DLK.

Belongs to the organic radical-activating enzymes family. Requires [4Fe-4S] cluster as cofactor.

It localises to the cytoplasm. The catalysed reaction is glycyl-[formate C-acetyltransferase] + reduced [flavodoxin] + S-adenosyl-L-methionine = glycin-2-yl radical-[formate C-acetyltransferase] + semiquinone [flavodoxin] + 5'-deoxyadenosine + L-methionine + H(+). Activation of pyruvate formate-lyase 1 under anaerobic conditions by generation of an organic free radical, using S-adenosylmethionine and reduced flavodoxin as cosubstrates to produce 5'-deoxy-adenosine. The chain is Pyruvate formate-lyase 1-activating enzyme (pflA) from Escherichia coli O157:H7.